The chain runs to 162 residues: Allophycocyanin subunit beta (162 aa).

Position 72 is an N4-methylasparagine (asparagine 72). Cysteine 82 is a binding site for (2R,3E)-phycocyanobilin.

It belongs to the phycobiliprotein family. Heterohexamer of two alpha chains, one alpha-B chain and three beta chains. Contains one covalently linked phycocyanobilin chromophore. The chromophore is added by phycocyanobilin lyase CpcS 1.

The protein localises to the cellular thylakoid membrane. Functionally, light-harvesting photosynthetic bile pigment-protein from the phycobiliprotein complex. Allophycocyanin has a maximum absorption at approximately 650 to 653 nanometers. The protein is Allophycocyanin subunit beta (apcB) of Nostoc sp. (strain PCC 7120 / SAG 25.82 / UTEX 2576).